The sequence spans 286 residues: Neuferricin homolog (286 aa).

A signal peptide spans 1 to 23 (MFGFVKYLFKLQFLFILAAVLAG). A Cytochrome b5 heme-binding domain is found at 61–145 (ATVLTSAELS…KPNDLLGLAN (85 aa)). Residues 176–200 (HKYLALLEQAQIAKAEVDELRSKYP) adopt a coiled-coil conformation.

The protein belongs to the cytochrome b5 family. MAPR subfamily.

The protein localises to the secreted. Its function is as follows. Heme-binding protein. The protein is Neuferricin homolog of Drosophila pseudoobscura pseudoobscura (Fruit fly).